The sequence spans 670 residues: UvrABC system protein B (670 aa).

The Helicase ATP-binding domain maps to 28 to 414 (NNFKQGLQEQ…KKIPIVEQII (387 aa)). 41-48 (GATGTGKT) serves as a coordination point for ATP. The short motif at 94 to 117 (YYDYYQPEAYVASSDTYIEKDSKI) is the Beta-hairpin element. Residues 432-594 (QMDDLYFEIK…VTPTALNKTI (163 aa)) form the Helicase C-terminal domain. A UVR domain is found at 631–666 (NKEIKRLQKMMKEAAKTLDFEKAATLRDLILELEKK).

It belongs to the UvrB family. In terms of assembly, forms a heterotetramer with UvrA during the search for lesions. Interacts with UvrC in an incision complex.

It is found in the cytoplasm. Its function is as follows. The UvrABC repair system catalyzes the recognition and processing of DNA lesions. A damage recognition complex composed of 2 UvrA and 2 UvrB subunits scans DNA for abnormalities. Upon binding of the UvrA(2)B(2) complex to a putative damaged site, the DNA wraps around one UvrB monomer. DNA wrap is dependent on ATP binding by UvrB and probably causes local melting of the DNA helix, facilitating insertion of UvrB beta-hairpin between the DNA strands. Then UvrB probes one DNA strand for the presence of a lesion. If a lesion is found the UvrA subunits dissociate and the UvrB-DNA preincision complex is formed. This complex is subsequently bound by UvrC and the second UvrB is released. If no lesion is found, the DNA wraps around the other UvrB subunit that will check the other stand for damage. The polypeptide is UvrABC system protein B (Onion yellows phytoplasma (strain OY-M)).